We begin with the raw amino-acid sequence, 373 residues long: Queuine tRNA-ribosyltransferase (373 aa).

Residue Asp-90 is the Proton acceptor of the active site. Substrate contacts are provided by residues Asp-90 to Phe-94, Asp-144, Gln-193, and Gly-220. An RNA binding region spans residues Gly-251–Asp-257. The active-site Nucleophile is Asp-270. The tract at residues Thr-275 to Arg-279 is RNA binding; important for wobble base 34 recognition. Zn(2+)-binding residues include Cys-308, Cys-310, Cys-313, and His-339.

The protein belongs to the queuine tRNA-ribosyltransferase family. In terms of assembly, homodimer. Within each dimer, one monomer is responsible for RNA recognition and catalysis, while the other monomer binds to the replacement base PreQ1. The cofactor is Zn(2+).

The enzyme catalyses 7-aminomethyl-7-carbaguanine + guanosine(34) in tRNA = 7-aminomethyl-7-carbaguanosine(34) in tRNA + guanine. Its pathway is tRNA modification; tRNA-queuosine biosynthesis. In terms of biological role, catalyzes the base-exchange of a guanine (G) residue with the queuine precursor 7-aminomethyl-7-deazaguanine (PreQ1) at position 34 (anticodon wobble position) in tRNAs with GU(N) anticodons (tRNA-Asp, -Asn, -His and -Tyr). Catalysis occurs through a double-displacement mechanism. The nucleophile active site attacks the C1' of nucleotide 34 to detach the guanine base from the RNA, forming a covalent enzyme-RNA intermediate. The proton acceptor active site deprotonates the incoming PreQ1, allowing a nucleophilic attack on the C1' of the ribose to form the product. After dissociation, two additional enzymatic reactions on the tRNA convert PreQ1 to queuine (Q), resulting in the hypermodified nucleoside queuosine (7-(((4,5-cis-dihydroxy-2-cyclopenten-1-yl)amino)methyl)-7-deazaguanosine). This chain is Queuine tRNA-ribosyltransferase, found in Campylobacter jejuni subsp. jejuni serotype O:6 (strain 81116 / NCTC 11828).